Consider the following 138-residue polypeptide: MKSDSPVHGESHTECQSPCPLSCMPARLEGSTKRRLAANARERRRMQGLNTAFDSLRKVVPQWGEDKKLSKYETLQMALSYIMALSRILTEAERYSRTDPGEWTKMHFDHIQEEQCLSYMGVRCPRDCDRYLPQTFSH.

In terms of domain architecture, bHLH spans 33 to 85 (KRRLAANARERRRMQGLNTAFDSLRKVVPQWGEDKKLSKYETLQMALSYIMAL).

The protein resides in the nucleus. It is found in the perikaryon. It localises to the cell projection. Its subcellular location is the axon. In terms of biological role, transcription factor that binds to DNA at the consensus sequence 5'-CAG[GC]TG-3'. Positively regulates the determination of retinal ganglion cell fate and formation of the optic nerve and retino-hypothalamic tract. Required for retinal circadian rhythm photoentrainment. Plays a role in brainstem auditory signaling and binaural processing. Regulates the differentiation of olfactory receptor neurons. During retinal neurogenesis, activates the transcription of several genes such as brn3d, coe3, cbfa2t2, glis2, elrC and xgadd45-gamma. This is Transcription factor Atoh7-b from Xenopus laevis (African clawed frog).